A 407-amino-acid chain; its full sequence is Acetate kinase (407 aa).

Asn10 lines the Mg(2+) pocket. Lys17 contributes to the ATP binding site. Arg91 serves as a coordination point for substrate. Asp150 functions as the Proton donor/acceptor in the catalytic mechanism. ATP-binding positions include 210-214, 285-287, and 338-342; these read HLGNG, DCR, and GIGEN. Glu392 contacts Mg(2+).

It belongs to the acetokinase family. In terms of assembly, homodimer. Mg(2+) is required as a cofactor. Requires Mn(2+) as cofactor.

It is found in the cytoplasm. The enzyme catalyses acetate + ATP = acetyl phosphate + ADP. It participates in metabolic intermediate biosynthesis; acetyl-CoA biosynthesis; acetyl-CoA from acetate: step 1/2. Its function is as follows. Catalyzes the formation of acetyl phosphate from acetate and ATP. Can also catalyze the reverse reaction. This is Acetate kinase from Mannheimia succiniciproducens (strain KCTC 0769BP / MBEL55E).